The chain runs to 105 residues: Large ribosomal subunit protein uL24 (105 aa).

Belongs to the universal ribosomal protein uL24 family. Part of the 50S ribosomal subunit.

One of two assembly initiator proteins, it binds directly to the 5'-end of the 23S rRNA, where it nucleates assembly of the 50S subunit. Functionally, one of the proteins that surrounds the polypeptide exit tunnel on the outside of the subunit. The polypeptide is Large ribosomal subunit protein uL24 (Staphylococcus carnosus (strain TM300)).